The chain runs to 235 residues: Heme oxygenase (235 aa).

H19 provides a ligand contact to heme b.

The protein belongs to the heme oxygenase family.

It is found in the plastid. The protein localises to the chloroplast. The enzyme catalyses heme b + 3 reduced [NADPH--hemoprotein reductase] + 3 O2 = biliverdin IXalpha + CO + Fe(2+) + 3 oxidized [NADPH--hemoprotein reductase] + 3 H2O + H(+). Functionally, catalyzes the opening of the heme ring with the release of iron. Key enzyme in the synthesis of the chromophoric part of the photosynthetic antennae. This Rhodella violacea (Red alga) protein is Heme oxygenase (pbsA).